Here is a 176-residue protein sequence, read N- to C-terminus: Large ribosomal subunit protein bL12m (176 aa).

It belongs to the bacterial ribosomal protein bL12 family. Component of the mitochondrial large ribosomal subunit (mt-LSU). Mature N.crassa 74S mitochondrial ribosomes consist of a small (37S) and a large (54S) subunit. The 37S small subunit contains a 16S ribosomal RNA (16S mt-rRNA) and 32 different proteins. The 54S large subunit contains a 23S rRNA (23S mt-rRNA) and 42 different proteins.

Its subcellular location is the mitochondrion. Functionally, component of the mitochondrial ribosome (mitoribosome), a dedicated translation machinery responsible for the synthesis of mitochondrial genome-encoded proteins, including at least some of the essential transmembrane subunits of the mitochondrial respiratory chain. The mitoribosomes are attached to the mitochondrial inner membrane and translation products are cotranslationally integrated into the membrane. This is Large ribosomal subunit protein bL12m (mrpl12) from Neurospora crassa (strain ATCC 24698 / 74-OR23-1A / CBS 708.71 / DSM 1257 / FGSC 987).